Reading from the N-terminus, the 918-residue chain is Isoleucine--tRNA ligase (918 aa).

The 'HIGH' region signature appears at 57-67 (PYANGHIHIGH). Residue Glu-564 coordinates L-isoleucyl-5'-AMP. The 'KMSKS' region signature appears at 605-609 (KMSKS). Lys-608 contributes to the ATP binding site. Cys-888, Cys-891, Cys-903, and Cys-906 together coordinate Zn(2+).

It belongs to the class-I aminoacyl-tRNA synthetase family. IleS type 1 subfamily. In terms of assembly, monomer. Zn(2+) serves as cofactor.

It is found in the cytoplasm. The catalysed reaction is tRNA(Ile) + L-isoleucine + ATP = L-isoleucyl-tRNA(Ile) + AMP + diphosphate. Catalyzes the attachment of isoleucine to tRNA(Ile). As IleRS can inadvertently accommodate and process structurally similar amino acids such as valine, to avoid such errors it has two additional distinct tRNA(Ile)-dependent editing activities. One activity is designated as 'pretransfer' editing and involves the hydrolysis of activated Val-AMP. The other activity is designated 'posttransfer' editing and involves deacylation of mischarged Val-tRNA(Ile). In Nitratiruptor sp. (strain SB155-2), this protein is Isoleucine--tRNA ligase.